The chain runs to 513 residues: Carotenoid isomerooxygenase (513 aa).

His184, His242, His312, and His503 together coordinate Fe cation.

This sequence belongs to the carotenoid oxygenase family. The cofactor is Fe(2+).

The enzyme catalyses all-trans-zeaxanthin + O2 = (3R)-11-cis-3-hydroxyretinal + (3R)-all-trans-3-hydroxyretinal. It functions in the pathway cofactor metabolism; retinol metabolism. In terms of biological role, catalyzes the oxidative cleavage at the 15,15'-double bond of carotenoids and the simultaneous all-trans to 11-cis isomerization of one cleavage product. Carotenoids like 11-cis retinal can promote visual pigment biogenesis in the dark. Essential for the biosynthesis of the 3-hydroxyretinal chromophore of rhodopsin from zeaxanthin and for proper photoreceptor development. This Galleria mellonella (Greater wax moth) protein is Carotenoid isomerooxygenase (ninaB).